We begin with the raw amino-acid sequence, 82 residues long: Small ribosomal subunit protein bS18 (82 aa).

The protein belongs to the bacterial ribosomal protein bS18 family. Part of the 30S ribosomal subunit. Forms a tight heterodimer with protein bS6.

Its function is as follows. Binds as a heterodimer with protein bS6 to the central domain of the 16S rRNA, where it helps stabilize the platform of the 30S subunit. This is Small ribosomal subunit protein bS18 from Rhizobium rhizogenes (strain K84 / ATCC BAA-868) (Agrobacterium radiobacter).